Reading from the N-terminus, the 89-residue chain is Three-finger toxin 3 (89 aa).

The first 16 residues, 1 to 16 (MKTLLLILGVVAFVYL), serve as a signal peptide directing secretion. Intrachain disulfides connect cysteine 24–cysteine 47, cysteine 40–cysteine 66, cysteine 70–cysteine 81, and cysteine 82–cysteine 87.

The protein belongs to the three-finger toxin family. Ancestral subfamily. Expressed by the venom gland.

Its subcellular location is the secreted. The protein is Three-finger toxin 3 of Sistrurus catenatus edwardsii (Desert massasauga).